The following is a 585-amino-acid chain: Poly(A) RNA polymerase, mitochondrial (585 aa).

Residues 1 to 37 (MAARGVGLLTRLPVCSQRRNRIPRSISRLLSCPGTIA) constitute a mitochondrion transit peptide. Lysine 90 is subject to N6-acetyllysine. Residues 107–109 (YES) and 244–245 (GC) contribute to the ATP site. Aspartate 246 and aspartate 248 together coordinate Mg(2+). One can recognise a PAP-associated domain in the interval 441 to 486 (ELLIKEFFEYFGNFAFNKNSINIRQGREQNKPDSSPLYIQNPFETS). The disordered stretch occupies residues 537–585 (PGSGHTSLSRKKKKKPMSEKVKGLLASIKSNSPDSSTDTSGKRTISTQA). Residues 564-585 (IKSNSPDSSTDTSGKRTISTQA) show a composition bias toward polar residues.

Belongs to the DNA polymerase type-B-like family. In terms of assembly, homodimer. Requires Mg(2+) as cofactor. The cofactor is Mn(2+).

The protein resides in the cytoplasm. The protein localises to the mitochondrion. The enzyme catalyses RNA(n) + ATP = RNA(n)-3'-adenine ribonucleotide + diphosphate. Its function is as follows. Polymerase that creates the 3' poly(A) tail of mitochondrial transcripts. Can use all four nucleotides, but has higher activity with ATP and UTP (in vitro). Plays a role in replication-dependent histone mRNA degradation. May be involved in the terminal uridylation of mature histone mRNAs before their degradation is initiated. Might be responsible for the creation of some UAA stop codons which are not encoded in mtDNA. This is Poly(A) RNA polymerase, mitochondrial (Mtpap) from Mus musculus (Mouse).